A 220-amino-acid polypeptide reads, in one-letter code: tRNA (guanine-N(7)-)-methyltransferase (220 aa).

Glu42, Glu67, and Asp122 together coordinate S-adenosyl-L-methionine. Residue Asp122 is part of the active site. Substrate-binding positions include Lys126, Asp158, and 198-201 (TEYE).

Belongs to the class I-like SAM-binding methyltransferase superfamily. TrmB family.

It catalyses the reaction guanosine(46) in tRNA + S-adenosyl-L-methionine = N(7)-methylguanosine(46) in tRNA + S-adenosyl-L-homocysteine. It functions in the pathway tRNA modification; N(7)-methylguanine-tRNA biosynthesis. Catalyzes the formation of N(7)-methylguanine at position 46 (m7G46) in tRNA. The chain is tRNA (guanine-N(7)-)-methyltransferase from Mycoplasma capricolum subsp. capricolum (strain California kid / ATCC 27343 / NCTC 10154).